The primary structure comprises 2027 residues: Citron Rho-interacting kinase (2027 aa).

Position 1 is an N-acetylmethionine (Met-1). One can recognise a Protein kinase domain in the interval 97–360 (FEVRSLVGCG…FEGLCCHPFF (264 aa)). ATP is bound by residues 103-111 (VGCGHFAEV) and Lys-126. Asp-221 acts as the Proton acceptor in catalysis. The AGC-kinase C-terminal domain maps to 361-431 (SKIDWNNIRN…SKALGILGRS (71 aa)). 4 positions are modified to phosphoserine: Ser-433, Ser-440, Ser-480, and Ser-582. The stretch at 453–1297 (IKSKELQDSQ…SAREEAAHRK (845 aa)) forms a coiled coil. The interval 1091 to 1302 (LAVKEHKAEI…AAHRKATDHP (212 aa)) is interaction with Rho/Rac. The residue at position 1196 (Tyr-1196) is a Phosphotyrosine. The span at 1290 to 1303 (REEAAHRKATDHPH) shows a compositional bias: basic and acidic residues. 2 disordered regions span residues 1290 to 1310 (REEA…PATA) and 1322 to 1351 (SPEH…EFSR). Over residues 1327 to 1337 (PSAMSLLAPPS) the composition is skewed to low complexity. The span at 1339–1351 (RRKESSTPEEFSR) shows a compositional bias: basic and acidic residues. The segment at 1362 to 1411 (PHRFNVGLNMRATKCAVCLDTVHFGRQASKCLECQVMCHPKCSTCLPATC) adopts a Phorbol-ester/DAG-type zinc-finger fold. The PH domain maps to 1443–1563 (SLHLEGWMKV…WVTALESVVA (121 aa)). The CNH domain occupies 1591–1881 (RLDMNCTLPF…RYLGPAISSG (291 aa)). Lys-1721 is subject to N6-acetyllysine. The disordered stretch occupies residues 1905–2012 (ESGTEHHRGP…RGRLPAGAVR (108 aa)). Phosphoserine is present on Ser-1940. Basic and acidic residues predominate over residues 1948-2003 (SHPREPSTPHRYREGRTELRRDKSPGRPLEREKSPGRMLSTRRERSPGRLFEDSSR). The short motif at 1953-1958 (PSTPHR) is the SH3-binding element. Ser-1993 is modified (phosphoserine). Thr-2013 bears the Phosphothreonine mark.

This sequence belongs to the protein kinase superfamily. AGC Ser/Thr protein kinase family. Directly interacts with KIF14 depending on the activation state (stronger interaction with the kinase-dead form). Homodimer. Interacts with TTC3.

It localises to the cytoplasm. The enzyme catalyses L-seryl-[protein] + ATP = O-phospho-L-seryl-[protein] + ADP + H(+). It catalyses the reaction L-threonyl-[protein] + ATP = O-phospho-L-threonyl-[protein] + ADP + H(+). Its function is as follows. Plays a role in cytokinesis. Required for KIF14 localization to the central spindle and midbody. Putative RHO/RAC effector that binds to the GTP-bound forms of RHO and RAC1. It probably binds p21 with a tighter specificity in vivo. Displays serine/threonine protein kinase activity. Plays an important role in the regulation of cytokinesis and the development of the central nervous system. Phosphorylates MYL9/MLC2. The sequence is that of Citron Rho-interacting kinase (CIT) from Homo sapiens (Human).